The chain runs to 774 residues: Vezatin (774 aa).

The next 2 helical transmembrane spans lie at Ile-138–Ala-158 and Ser-163–Leu-183. Residues Val-430–Cys-457 adopt a coiled-coil conformation. The segment covering Phe-746–Glu-757 has biased composition (acidic residues). The segment at Phe-746–Gly-774 is disordered. Positions Asp-758–Asn-767 are enriched in basic and acidic residues.

The protein belongs to the vezatin family. As to quaternary structure, interacts with myosin VIIa and the cadherin-catenins complex.

Its subcellular location is the cell membrane. It localises to the cell junction. The protein localises to the adherens junction. It is found in the nucleus. Plays a pivotal role in the establishment of adherens junctions and their maintenance in adult life. The chain is Vezatin (vezt) from Xenopus laevis (African clawed frog).